The chain runs to 337 residues: Tryptophan--tRNA ligase (337 aa).

Residues 11 to 13 (QPT) and 19 to 20 (GN) contribute to the ATP site. The short motif at 12-20 (PTGNLHLGN) is the 'HIGH' region element. Aspartate 135 contributes to the L-tryptophan binding site. Residues 147–149 (GED), valine 190, and 199–203 (KMSKS) contribute to the ATP site. The short motif at 199 to 203 (KMSKS) is the 'KMSKS' region element.

The protein belongs to the class-I aminoacyl-tRNA synthetase family. As to quaternary structure, homodimer.

The protein localises to the cytoplasm. It carries out the reaction tRNA(Trp) + L-tryptophan + ATP = L-tryptophyl-tRNA(Trp) + AMP + diphosphate + H(+). Its function is as follows. Catalyzes the attachment of tryptophan to tRNA(Trp). The chain is Tryptophan--tRNA ligase from Synechocystis sp. (strain ATCC 27184 / PCC 6803 / Kazusa).